Reading from the N-terminus, the 343-residue chain is S-adenosylmethionine:tRNA ribosyltransferase-isomerase (343 aa).

The protein belongs to the QueA family. In terms of assembly, monomer.

It localises to the cytoplasm. The catalysed reaction is 7-aminomethyl-7-carbaguanosine(34) in tRNA + S-adenosyl-L-methionine = epoxyqueuosine(34) in tRNA + adenine + L-methionine + 2 H(+). It participates in tRNA modification; tRNA-queuosine biosynthesis. Functionally, transfers and isomerizes the ribose moiety from AdoMet to the 7-aminomethyl group of 7-deazaguanine (preQ1-tRNA) to give epoxyqueuosine (oQ-tRNA). The chain is S-adenosylmethionine:tRNA ribosyltransferase-isomerase from Stenotrophomonas maltophilia (strain R551-3).